The sequence spans 599 residues: Sodium-dependent phosphate transport protein 2C (599 aa).

Residues 1–76 (MPSSLPGSQV…RRVAGSVLKA (76 aa)) lie on the Cytoplasmic side of the membrane. The residue at position 4 (Ser4) is a Phosphoserine. The helical transmembrane segment at 77 to 97 (CGLLGSLYFFICSLDVLSSAF) threads the bilayer. The Extracellular segment spans residues 98 to 111 (QLLGSKVAGDIFKD). The helical transmembrane segment at 112–132 (NVVLSNPVAGLVIGVLVTALV) threads the bilayer. The Cytoplasmic portion of the chain corresponds to 133–188 (QSSSTSSSIVVSMVAAKLLTVRVSVPIIMGVNVGTSITSTLVSMAQSGDRDEFQRA). A helical transmembrane segment spans residues 189-209 (FSGSAVHGIFNWLTVLVLLPL). The Extracellular segment spans residues 210-322 (ESATALLERL…FAGTELTDLA (113 aa)). N-linked (GlcNAc...) asparagine glycosylation is found at Asn265, Asn268, Asn286, and Asn299. A disulfide bridge links Cys276 with Cys309. Residues 323–343 (VGCILLAGSLLVLCGCLVLIV) traverse the membrane as a helical segment. The Cytoplasmic segment spans residues 344-367 (KLLNSVLRGRVAQVVRTVINADFP). A helical membrane pass occupies residues 368 to 388 (FPLGWLGGYLAVLAGAGLTFA). Over 389–445 (LQSSSVFTAAVVPLMGVGVISLDRAYPLLLGSNIGTTTTALLAALASPADRMLSALQ) the chain is Extracellular. A helical transmembrane segment spans residues 446-466 (VALIHFFFNLAGILLWYLVPA). At 467–485 (LRLPIPLARHFGVVTARYR) the chain is on the cytoplasmic side. The chain crosses the membrane as a helical span at residues 486–506 (WVAGVYLLLGFLLLPLAAFGL). Residues 507-510 (SLAG) lie on the Extracellular side of the membrane. Residues 511-531 (GMELAAVGGPLVGLVLLVILV) traverse the membrane as a helical segment. At 532–599 (TVLQRRRPAW…NPEILASQQL (68 aa)) the chain is on the cytoplasmic side.

This sequence belongs to the SLC34A transporter family. Expressed only in the kidney.

Its subcellular location is the apical cell membrane. It catalyses the reaction 2 Na(+)(out) + phosphate(out) = 2 Na(+)(in) + phosphate(in). In terms of biological role, involved in actively transporting phosphate into cells via Na(+) cotransport in the renal brush border membrane. The cotransport has a Na(+):Pi stoichiometry of 2:1 and is electroneutral. In Homo sapiens (Human), this protein is Sodium-dependent phosphate transport protein 2C (SLC34A3).